The sequence spans 412 residues: Peptidase T (412 aa).

His-79 is a Zn(2+) binding site. The active site involves Asp-81. Asp-142 contributes to the Zn(2+) binding site. The Proton acceptor role is filled by Glu-176. Zn(2+) contacts are provided by Glu-177, Asp-199, and His-381.

Belongs to the peptidase M20B family. Requires Zn(2+) as cofactor.

The protein resides in the cytoplasm. It catalyses the reaction Release of the N-terminal residue from a tripeptide.. Cleaves the N-terminal amino acid of tripeptides. The chain is Peptidase T from Exiguobacterium sp. (strain ATCC BAA-1283 / AT1b).